The following is a 279-amino-acid chain: Oxygen-dependent coproporphyrinogen-III oxidase (279 aa).

Ser-102 contacts substrate. A divalent metal cation is bound by residues His-106 and His-116. The Proton donor role is filled by His-116. Substrate is bound at residue 118–120 (NTR). The a divalent metal cation site is built by His-149 and His-179. The important for dimerization stretch occupies residues 244-279 (YVEFNLLYDRGTKFGLMTDGNVEAILMSLPPEVKFN).

The protein belongs to the aerobic coproporphyrinogen-III oxidase family. As to quaternary structure, homodimer. Requires a divalent metal cation as cofactor.

The protein resides in the cytoplasm. The enzyme catalyses coproporphyrinogen III + O2 + 2 H(+) = protoporphyrinogen IX + 2 CO2 + 2 H2O. The protein operates within porphyrin-containing compound metabolism; protoporphyrin-IX biosynthesis; protoporphyrinogen-IX from coproporphyrinogen-III (O2 route): step 1/1. Involved in the heme biosynthesis. Catalyzes the aerobic oxidative decarboxylation of propionate groups of rings A and B of coproporphyrinogen-III to yield the vinyl groups in protoporphyrinogen-IX. The sequence is that of Oxygen-dependent coproporphyrinogen-III oxidase from Rickettsia conorii (strain ATCC VR-613 / Malish 7).